The following is an 825-amino-acid chain: MEPRPGTSSRADPGPERPPRQTPGTQPAAPHAWGMLNDMQWLASSDSEEETEVGISDDDLHRDSTSEAGSTDTEMFEAGLMDAATPPARPPAERQGSPTPADAQGSCGGGPVGEEEAEAGGGGDVCAVCTDEIAPPLRCQSFPCLHPFCIPCMKTWIPLRNTCPLCNTPVAYLIVGVTASGSFSTIPIVNDPRTRVEAEAAVRAGTAVDFIWTGNPRTAPRSLSLGGHTVRALSPTPPWPGTDDEDDDLADVDYVPPAPRRAPRRGGGGAGATRGTSQPAATRPAPPGAPRSSSSGGAPLRAGVGSGSGGGPAVAAVVPRVASLPPAAGGGRAQARRVGEDAAAAEGRTPPARQPRAAQEPPIVISDSPPPSPRRPAGPGPLSFVSSSSAQVSSGPGGGGLPQSSGRAARPRAAVAPRVRSPPRAAAAPVVSASADAAGPAPPAVPVDAHRAPRSRMTQAQTDTQAQSLGRAGATDARGSGGPGAEGGPGVPRGTNTPGAAPHAAEGAAARPRKRRGSDSGPAASSSASSSAAPRSPLAPQGVGAKRAAPRRAPDSDSGDRGHGPLAPASAGAAPPSASPSSQAAVAAASSSSASSSSASSSSASSSSASSSSASSSSASSSSASSSAGGAGGSVASASGAGERRETSLGPRAAAPRGPRKCARKTRHAEGGPEPGARDPAPGLTRYLPIAGVSSVVALAPYVNKTVTGDCLPVLDMETGHIGAYVVLVDQTGNVADLLRAAAPAWSRRTLLPEHARNCVRPPDYPTPPASEWNSLWMTPVGNMLFDQGTLVGALDFHGLRSRHPWSREQGAPAPAGDAPAGHGE.

Residues Met1–Arg10 are compositionally biased toward polar residues. The segment at Met1–Gly121 is disordered. The span at Asp46–Asp57 shows a compositional bias: acidic residues. An RING-type zinc finger spans residues Cys126–Asn167. Disordered stretches follow at residues Arg221–Pro312, Pro325–Gly683, and Arg803–Glu825. The segment covering Thr242–Asp251 has biased composition (acidic residues). Composition is skewed to low complexity over residues Thr273–Arg283, Pro290–Gly303, and Pro350–Asp367. Residues Ser368–Pro379 show a composition bias toward pro residues. 2 stretches are compositionally biased toward low complexity: residues Gly380–Ser394 and Pro402–Gly439. The span at Arg456 to Ser468 shows a compositional bias: polar residues. A compositionally biased stretch (gly residues) spans Gly479–Val491. Low complexity-rich tracts occupy residues Pro492 to Ala510 and Asp519 to Pro540. Residues Arg552 to His563 show a composition bias toward basic and acidic residues. Over residues Ala567–Ala641 the composition is skewed to low complexity. Residues Gly658–Arg667 are compositionally biased toward basic residues. The segment covering Gly811 to Glu825 has biased composition (low complexity).

Post-translationally, auto-ubiquitinated.

The catalysed reaction is S-ubiquitinyl-[E2 ubiquitin-conjugating enzyme]-L-cysteine + [acceptor protein]-L-lysine = [E2 ubiquitin-conjugating enzyme]-L-cysteine + N(6)-ubiquitinyl-[acceptor protein]-L-lysine.. Evades nuclear antiviral defenses triggered by dsDNA viruses. Acts during the initial stages of lytic infection and the reactivation of latent viral genome. Prevents the antiviral effect of nuclear bodies by degrading host PML and SP100. Prevents antiviral response to viral DNA induced by IFI16 by degrading it. Additionally, inhibits host IRF3 nuclear signaling to prevent interferon production by the infected cells. The polypeptide is E3 ubiquitin-protein ligase ICP0 (RL2) (Homo sapiens (Human)).